The chain runs to 964 residues: Probable outer membrane protein PmpE (964 aa).

An N-terminal signal peptide occupies residues 1-18 (MKKAFFFFLIGNSLSGLA). Positions 683–964 (LTPSGHPFWG…YLNGEIALRF (282 aa)) constitute an Autotransporter domain.

This sequence belongs to the PMP outer membrane protein family.

It is found in the secreted. The protein resides in the cell wall. The protein localises to the cell outer membrane. In Chlamydia trachomatis serovar D (strain ATCC VR-885 / DSM 19411 / UW-3/Cx), this protein is Probable outer membrane protein PmpE (pmpE).